Consider the following 500-residue polypeptide: Glycerol kinase (500 aa).

Thr13 contributes to the ADP binding site. ATP contacts are provided by Thr13, Thr14, and Ser15. Thr13 lines the sn-glycerol 3-phosphate pocket. Arg17 is an ADP binding site. Residues Arg83, Glu84, and Tyr135 each coordinate sn-glycerol 3-phosphate. Residues Arg83, Glu84, and Tyr135 each contribute to the glycerol site. Phosphohistidine; by HPr is present on His231. Asp245 contributes to the sn-glycerol 3-phosphate binding site. Asp245 and Gln246 together coordinate glycerol. Residues Thr267 and Gly310 each contribute to the ADP site. Thr267, Gly310, Gln314, and Gly411 together coordinate ATP. ADP is bound by residues Gly411 and Asn415.

Belongs to the FGGY kinase family. Homotetramer and homodimer (in equilibrium). The phosphoenolpyruvate-dependent sugar phosphotransferase system (PTS), including enzyme I, and histidine-containing protein (HPr) are required for the phosphorylation, which leads to the activation of the enzyme.

It catalyses the reaction glycerol + ATP = sn-glycerol 3-phosphate + ADP + H(+). Its pathway is polyol metabolism; glycerol degradation via glycerol kinase pathway; sn-glycerol 3-phosphate from glycerol: step 1/1. Activated by phosphorylation and inhibited by fructose 1,6-bisphosphate (FBP). Key enzyme in the regulation of glycerol uptake and metabolism. Catalyzes the phosphorylation of glycerol to yield sn-glycerol 3-phosphate. The protein is Glycerol kinase of Oceanobacillus iheyensis (strain DSM 14371 / CIP 107618 / JCM 11309 / KCTC 3954 / HTE831).